A 445-amino-acid polypeptide reads, in one-letter code: FAD-dependent monooxygenase sorC (445 aa).

A helical membrane pass occupies residues 8–28 (PFEVAIVGGGITGLALAVGLL). Asn31 carries N-linked (GlcNAc...) asparagine glycosylation. Positions 38 and 119 each coordinate FAD. Arg201 is a catalytic residue. FAD contacts are provided by Asp323 and Ala336. Asn358 is a glycosylation site (N-linked (GlcNAc...) asparagine).

Belongs to the paxM FAD-dependent monooxygenase family. The cofactor is FAD.

It localises to the membrane. It participates in secondary metabolite biosynthesis. FAD-dependent monooxygenase; part of the gene cluster that mediates the biosynthesis of sorbicillinoids, a diverse group of yellow secondary metabolites that restrict growth of competing pathogenic fungi but not of bacteria. Sorbicillinoids biosynthesis requires the action of two PKSs. SorA iteratively combines three acetyl units and the growing chain is modified by the ketoacyl reductase subunit, and optional by the enoyl reductase subunit in the second cycle. The polyketide is then handed over to the PKS SorB, which adds three more acetyl units, and two methyl groups. SorB releases an aldehyde, which undergoes spontaneous cyclization resulting in the formation of sorbicillin or 2',3'-dihydrosorbicillin. The monooxygenase sorC oxidizes sorbicillin and 2',3'-dihydrosorbicillin to 2',3'-dihydrosorbicillinol and sorbicillinol, respectively. The oxidoreductase sorD further converts sorbicillinol into oxosorbicillinol. Sorbicillinol is the building block for the other sorbicillinoids such as disorbicillinol, bisvertinolon, and dihydrobisvertinolone. This chain is FAD-dependent monooxygenase sorC, found in Penicillium rubens (strain ATCC 28089 / DSM 1075 / NRRL 1951 / Wisconsin 54-1255) (Penicillium chrysogenum).